We begin with the raw amino-acid sequence, 219 residues long: Ribosome hibernation promotion factor (219 aa).

The protein belongs to the HPF/YfiA ribosome-associated protein family. Long HPF subfamily. In terms of assembly, interacts with 100S ribosomes.

It is found in the cytoplasm. Functionally, required for dimerization of active 70S ribosomes into 100S ribosomes in stationary phase; 100S ribosomes are translationally inactive and sometimes present during exponential growth. This chain is Ribosome hibernation promotion factor, found in Mycobacterium tuberculosis (strain ATCC 25618 / H37Rv).